We begin with the raw amino-acid sequence, 250 residues long: Small ribosomal subunit protein uS2 (250 aa).

Belongs to the universal ribosomal protein uS2 family.

The protein is Small ribosomal subunit protein uS2 of Paracidovorax citrulli (strain AAC00-1) (Acidovorax citrulli).